Consider the following 721-residue polypeptide: Transcription activator of gluconeogenesis ARB_05058 (721 aa).

The span at 1-34 (MSPHQTTGQESDNMTVNGENAQASSQYIQSNEEM) shows a compositional bias: polar residues. Residues 1–62 (MSPHQTTGQE…PSRPKRKKAK (62 aa)) are disordered. The span at 40 to 55 (TEKKASTAKAAKDPSR) shows a compositional bias: basic and acidic residues. Positions 65 to 93 (CYACQRGHLTCGDERPCQRCIKRGFQDAC) form a DNA-binding region, zn(2)-C6 fungal-type. Disordered regions lie at residues 128–224 (QNNA…FNSA), 263–300 (GDTP…SNQA), 353–400 (SPAS…TPQL), 533–567 (NHNV…YNSS), and 635–666 (GLNG…QRRW). 4 stretches are compositionally biased toward polar residues: residues 133–213 (GSNT…TPSA), 267–277 (PSESGAQRGSI), 287–300 (LTGS…SNQA), and 361–379 (MMTT…GAFN). 2 stretches are compositionally biased toward low complexity: residues 380 to 399 (SRQN…STPQ) and 543 to 553 (GLMTGSTSRGS). Positions 640 to 661 (AASNETNELNGSLTNGATTNGR) are enriched in polar residues.

This sequence belongs to the ERT1/acuK family.

The protein resides in the nucleus. In terms of biological role, transcription factor which regulates nonfermentable carbon utilization. Activator of gluconeogenetic genes. This is Transcription activator of gluconeogenesis ARB_05058 from Arthroderma benhamiae (strain ATCC MYA-4681 / CBS 112371) (Trichophyton mentagrophytes).